Reading from the N-terminus, the 314-residue chain is uncharacterized protein (314 aa).

2 disordered regions span residues 170–203 and 258–314; these read RSSMNSQSQMSESSFPTPIDPPPRIPHPPLNPDE and VGES…PKKR. Residues 171 to 186 are compositionally biased toward low complexity; it reads SSMNSQSQMSESSFPT. Residues 187–200 are compositionally biased toward pro residues; that stretch reads PIDPPPRIPHPPLN. Positions 261 to 272 are enriched in polar residues; it reads SSRQGENTQNVH. Positions 289–303 are enriched in basic and acidic residues; it reads RFKDDARKSNEDEHM.

This is an uncharacterized protein from Arabidopsis thaliana (Mouse-ear cress).